Reading from the N-terminus, the 774-residue chain is MRASLLLSVLRPAGPVAVGISLGFTLSLLSVTWVEEPCGPGPPQPGDSELPPRGNTNAARRPNSVQPGSERERPGAGAGTGESWEPRVLPYHPAQPGQATKKAVRTRYISTELGIRQKLLVAVLTSQATLPTLGVAVNRTLGHRLEHVVFLTGARGRRTPSGMAVVALGEERPIGHLHLALRHLLEQHGDDFDWFFLVPDATYTEAHGLDRLAGHLSLASATHLYLGRPQDFIGGDTTPGRYCHGGFGVLLSRTLLQQLRPHLESCRNDIVSARPDEWLGRCILDATGVGCTGDHEGMHYNYLELSPGEPVQEGDPRFRSALTAHPVRDPVHMYQLHKAFARAELDRTYQEIQELQWEIQNTSRLAADGERASAWPVGIPAPSRPASRFEVLRWDYFTEQYAFSCADGSPRCPLRGADQADVADVLGTALEELNRRYQPALQLQKQQLVNGYRRFDPARGMEYTLDLQLEALTPQGGRWPLTRRVQLLRPLSRVEILPVPYVTEASRLTVLLPLAAAERDLASGFLEAFATAALEPGDAAALTLLLLYEPRQAQRAAHSDVFAPVKAHVAELERRFPGARVPWLSVQTAAPSPLRLMDLLSKKHPLDTLFLLAGPDTVLTPDFLNRCRMHAISGWQAFFPMHFQAFHPAVAPPQGPGPPELGRDTGHFDRQAASEACFYNSDYVAARGRLVAASEQEEELLESLDVYELFLRFSNLHVLRAVEPALLQRYRAQPCSARLSEDLYHRCRQSVLEGLGSRTQLAMLLFEQEQGNST.

The Cytoplasmic portion of the chain corresponds to 1-15 (MRASLLLSVLRPAGP). The chain crosses the membrane as a helical; Signal-anchor for type II membrane protein span at residues 16 to 34 (VAVGISLGFTLSLLSVTWV). Over 35–774 (EEPCGPGPPQ…LFEQEQGNST (740 aa)) the chain is Lumenal. Residues 37 to 103 (PCGPGPPQPG…AQPGQATKKA (67 aa)) form a disordered region. Positions 54–67 (GNTNAARRPNSVQP) are enriched in polar residues. N138 and N361 each carry an N-linked (GlcNAc...) asparagine glycan. Residue D616 participates in a divalent metal cation binding.

Belongs to the chondroitin N-acetylgalactosaminyltransferase family. In terms of assembly, interacts with PRKN. It depends on Mn(2+) as a cofactor. Co(2+) is required as a cofactor. Isoform 1, isoform 2 and isoform 3 are expressed in brain (at protein level).

It is found in the golgi apparatus. It localises to the golgi stack membrane. The protein localises to the cytoplasm. The protein resides in the cytosol. Its subcellular location is the mitochondrion. It is found in the mitochondrion matrix. It carries out the reaction 3-O-(beta-D-GlcA-(1-&gt;3)-beta-D-GalNAc-(1-&gt;4)-beta-D-GlcA-(1-&gt;3)-beta-D-Gal-(1-&gt;3)-beta-D-Gal-(1-&gt;4)-beta-D-Xyl)-L-seryl-[protein] + UDP-N-acetyl-alpha-D-galactosamine = 3-O-(beta-D-GalNAc-(1-&gt;4)-beta-D-GlcA-(1-&gt;3)-beta-D-GalNAc-(1-&gt;4)-beta-D-GlcA-(1-&gt;3)-beta-D-Gal-(1-&gt;3)-beta-D-Gal-(1-&gt;4)-beta-D-Xyl)-L-seryl-[protein] + UDP + H(+). The enzyme catalyses 3-O-{beta-D-GlcA-(1-&gt;3)-[beta-D-GalNAc-(1-&gt;4)-beta-D-GlcA-(1-&gt;3)](n)-beta-D-GalNAc-(1-&gt;4)-beta-D-GlcA-(1-&gt;3)-beta-D-Gal-(1-&gt;3)-beta-D-Gal-(1-&gt;4)-beta-D-Xyl}-L-seryl-[protein] + UDP-N-acetyl-alpha-D-galactosamine = 3-O-{[beta-D-GalNAc-(1-&gt;4)-beta-D-GlcA-(1-&gt;3)](n+1)-beta-D-GalNAc-(1-&gt;4)-beta-D-GlcA-(1-&gt;3)-beta-D-Gal-(1-&gt;3)-beta-D-Gal-(1-&gt;4)-beta-D-Xyl}-L-seryl-[protein] + UDP + H(+). It catalyses the reaction 3-O-(beta-D-GalNAc-(1-&gt;4)-beta-D-GlcA-(1-&gt;3)-beta-D-Gal-(1-&gt;3)-beta-D-Gal-(1-&gt;4)-beta-D-Xyl)-L-seryl-[protein] + UDP-alpha-D-glucuronate = 3-O-(beta-D-GlcA-(1-&gt;3)-beta-D-GalNAc-(1-&gt;4)-beta-D-GlcA-(1-&gt;3)-beta-D-Gal-(1-&gt;3)-beta-D-Gal-(1-&gt;4)-beta-D-Xyl)-L-seryl-[protein] + UDP + H(+). The catalysed reaction is 3-O-{[beta-D-GalNAc-(1-&gt;4)-beta-D-GlcA-(1-&gt;3)](n)-beta-D-GalNAc-(1-&gt;4)-beta-D-GlcA-(1-&gt;3)-beta-D-Gal-(1-&gt;3)-beta-D-Gal-(1-&gt;4)-beta-D-Xyl}-L-seryl-[protein] + UDP-alpha-D-glucuronate = 3-O-{beta-D-GlcA-(1-&gt;3)-[beta-D-GalNAc-(1-&gt;4)-beta-D-GlcA-(1-&gt;3)](n)-beta-D-GalNAc-(1-&gt;4)-beta-D-GlcA-(1-&gt;3)-beta-D-Gal-(1-&gt;3)-beta-D-Gal-(1-&gt;4)-beta-D-Xyl}-L-seryl-[protein] + UDP + H(+). Functionally, has both beta-1,3-glucuronic acid and beta-1,4-N-acetylgalactosamine transferase activity. Transfers glucuronic acid (GlcUA) from UDP-GlcUA and N-acetylgalactosamine (GalNAc) from UDP-GalNAc to the non-reducing end of the elongating chondroitin polymer. Seems to act as a specific activating factor for CHSY1 in chondroitin polymerization. In terms of biological role, may facilitate PRKN transport into the mitochondria. In collaboration with PRKN, may enhance cell viability and protect cells from oxidative stress. The sequence is that of Chondroitin sulfate synthase 2 from Mus musculus (Mouse).